The primary structure comprises 139 residues: Non-structural protein 1 (139 aa).

Residues 136 to 139 (DLNS) carry the DLNP; interaction with MAP1B motif.

This sequence belongs to the pneumovirus non-structural protein 1 family. Monomer. Homomultimer. Heteromultimer with NS2. Interacts with the matrix protein M. Interacts with host ELOC and CUL2; this interaction allows NS1 to form an active E3 ligase with ELOC and CUL2. Interacts with host IRF3; this interaction leads to the disrupted association of IRF3 with CREBBP and thus reduced binding of IRF3 to the IFN-beta promoter. Interacts with host MAVS; this interaction prevents MAVS binding to RIGI and inhibits signaling pathway leading to interferon production. Interacts with host MAP1B/microtubule-associated protein 1B. Interacts with host TRIM25 (via SPRY domain); this interaction suppresses RIGI ubiquitination and results in decreased interaction between RIGI and MAVS.

Its subcellular location is the host cytoplasm. The protein localises to the host mitochondrion. It is found in the host nucleus. Functionally, plays a major role in antagonizing the type I IFN-mediated antiviral response by degrading or inhibiting multiple cellular factors required for either IFN induction or response pathways. Acts cooperatively with NS2 to repress activation and nuclear translocation of host IFN-regulatory factor IRF3. Also disrupts the association of IRF3 with CREBBP. Interacts with host mitochondrial-associated membrane (MAM) MAVS and prevents the interaction with RIGI. Interacts with TRIM25 to suppress TRIM25-mediated RIGI ubiquitination and thereby RIGI-MAVS interaction. Together with NS2, participates in the proteasomal degradation of host STAT2, IRF3, IRF7, TBK1 and RIGI through a NS-degradasome involving CUL2 and Elongin-C. The degradasome requires an intact mitochondrial MAVS. Decreases the levels of host TRAF3 and IKBKE/IKK-epsilon. As functions other than disruptions of the type I IFN-mediated antiviral signaling pathways, induces host SOCS1 and SOCS3 expression. Suppresses premature apoptosis by an NF-kappa-B-dependent, interferon-independent mechanism and thus facilitates virus growth. Additionally, NS1 may serve some inhibitory role in viral transcription and RNA replication. Suppresses proliferation and activation of host CD103+ CD8+ cytotoxic T-lymphocytes and Th17 helper T-lymphocytes. This is Non-structural protein 1 (1C) from Human respiratory syncytial virus B (strain 18537).